A 917-amino-acid chain; its full sequence is Auxin response factor 17 (917 aa).

The segment at residues 134–236 (FCKTLTASDT…QLLLGIRRAN (103 aa)) is a DNA-binding region (TF-B3). The disordered stretch occupies residues 571–649 (SVPNALSPFS…RPTAVPVPDP (79 aa)). Composition is skewed to low complexity over residues 576–594 (LSPFSQLSSPSQSSPMTLQ) and 604–620 (SYPDTSMSSLSPSNTST). The PB1 domain occupies 786–870 (ATFVKVYKSG…SCIKILSPQE (85 aa)).

Belongs to the ARF family. Homodimers and heterodimers.

Its subcellular location is the nucleus. In terms of biological role, auxin response factors (ARFs) are transcriptional factors that bind specifically to the DNA sequence 5'-TGTCTC-3' found in the auxin-responsive promoter elements (AuxREs). The polypeptide is Auxin response factor 17 (ARF17) (Oryza sativa subsp. indica (Rice)).